The primary structure comprises 249 residues: Putative type I specificity subunit S.MpnORF615P (249 aa).

It belongs to the type-I restriction system S methylase family. In terms of assembly, the methyltransferase is composed of M and S polypeptides.

The specificity (S) subunit of a type I methyltransferase (MTase); this subunit dictates DNA sequence specificity. The single R subunit has multiple frameshifts and is probably not expressed. The polypeptide is Putative type I specificity subunit S.MpnORF615P (Mycoplasma pneumoniae (strain ATCC 29342 / M129 / Subtype 1) (Mycoplasmoides pneumoniae)).